A 204-amino-acid polypeptide reads, in one-letter code: Uridylate kinase (204 aa).

Residue 26-31 (GAGKGT) participates in ATP binding. Positions 46–76 (SAGDLLRAEQGRAGSQYGELIKNCIKEGQIV) are NMP. A ribonucleoside 5'-phosphate-binding positions include Arg52, 74–76 (QIV), 104–107 (GFPR), and Gln111. The interval 141-151 (ERGKTSGRSDD) is LID. Arg142 contacts ATP. A ribonucleoside 5'-phosphate is bound by residues Arg148 and Arg159. An ATP-binding site is contributed by Arg187.

Belongs to the adenylate kinase family. UMP-CMP kinase subfamily. As to quaternary structure, monomer. It depends on Mg(2+) as a cofactor.

Its subcellular location is the cytoplasm. The protein localises to the nucleus. It catalyses the reaction UMP + ATP = UDP + ADP. In terms of biological role, catalyzes the phosphorylation of pyrimidine nucleoside monophosphates at the expense of ATP. Plays an important role in de novo pyrimidine nucleotide biosynthesis. Has preference for UMP and dUMP as phosphate acceptors, but can also use CMP, dCMP, AMP, GMP, dGMP and dTMP. ATP and dATP are the best phosphate donors, but can also use GTP, dGTP, dCTP, and dTTP to some degree. This chain is Uridylate kinase, found in Saccharomyces cerevisiae (strain ATCC 204508 / S288c) (Baker's yeast).